Consider the following 278-residue polypeptide: Dermonecrotic toxin LspiSicTox-betaIE2i (278 aa).

His-5 is a catalytic residue. Glu-25 and Asp-27 together coordinate Mg(2+). The active-site Nucleophile is His-41. 2 disulfide bridges follow: Cys-45-Cys-51 and Cys-47-Cys-190. Glu-85 provides a ligand contact to Mg(2+).

It belongs to the arthropod phospholipase D family. Class II subfamily. Requires Mg(2+) as cofactor. In terms of tissue distribution, expressed by the venom gland.

Its subcellular location is the secreted. It carries out the reaction an N-(acyl)-sphingosylphosphocholine = an N-(acyl)-sphingosyl-1,3-cyclic phosphate + choline. It catalyses the reaction an N-(acyl)-sphingosylphosphoethanolamine = an N-(acyl)-sphingosyl-1,3-cyclic phosphate + ethanolamine. The catalysed reaction is a 1-acyl-sn-glycero-3-phosphocholine = a 1-acyl-sn-glycero-2,3-cyclic phosphate + choline. The enzyme catalyses a 1-acyl-sn-glycero-3-phosphoethanolamine = a 1-acyl-sn-glycero-2,3-cyclic phosphate + ethanolamine. Dermonecrotic toxins cleave the phosphodiester linkage between the phosphate and headgroup of certain phospholipids (sphingolipid and lysolipid substrates), forming an alcohol (often choline) and a cyclic phosphate. This toxin acts on sphingomyelin (SM). It may also act on ceramide phosphoethanolamine (CPE), lysophosphatidylcholine (LPC) and lysophosphatidylethanolamine (LPE), but not on lysophosphatidylserine (LPS), and lysophosphatidylglycerol (LPG). It acts by transphosphatidylation, releasing exclusively cyclic phosphate products as second products. Induces dermonecrosis, hemolysis, increased vascular permeability, edema, inflammatory response, and platelet aggregation. The sequence is that of Dermonecrotic toxin LspiSicTox-betaIE2i from Loxosceles spinulosa (Recluse spider).